Reading from the N-terminus, the 190-residue chain is Translation initiation factor IF-3 (190 aa).

The protein belongs to the IF-3 family. As to quaternary structure, monomer.

It is found in the cytoplasm. IF-3 binds to the 30S ribosomal subunit and shifts the equilibrium between 70S ribosomes and their 50S and 30S subunits in favor of the free subunits, thus enhancing the availability of 30S subunits on which protein synthesis initiation begins. This Prochlorococcus marinus (strain AS9601) protein is Translation initiation factor IF-3.